The sequence spans 997 residues: Synaptonemal complex protein 1 (997 aa).

The Mediates head to head self-assembly of N-terminal ends signature appears at 102-112 (PMSRLYSKLYK). A Nuclear localization signal motif is present at residues 118–121 (KKWK). Coiled-coil stretches lie at residues 121 to 176 (KVSI…LIKE) and 212 to 696 (YVDL…KKIS). The interaction with SYCE3 stretch occupies residues 207 to 363 (ETRQVYVDLN…YQLTEEKEAQ (157 aa)). Residues 698–792 (EKLLGEVEKA…VSLKKQLEVE (95 aa)) form a required for pH-induced assembly of C-terminal ends into antiparallel tetramers region. A Nuclear localization signal motif is present at residues 701–704 (LGEV). The stretch at 768–806 (KVALETELSNIRNELVSLKKQLEVEKEEKEKLKMEQENT) forms a coiled coil. The tract at residues 805 to 997 (NTAILTDKKD…RLKEAEKLFT (193 aa)) is DNA-binding. Residue S824 is modified to Phosphoserine. The tract at residues 828–863 (TSWKFDSKTTPSQNISRLSSSMDSGKSKDNRDSLRA) is disordered. A compositionally biased stretch (polar residues) spans 835–851 (KTTPSQNISRLSSSMDS). Over residues 852–861 (GKSKDNRDSL) the composition is skewed to basic and acidic residues. The Nuclear localization signal signature appears at 902-905 (KKRK). T940 carries the phosphothreonine modification.

In terms of assembly, structural component of synaptonemal complexes. Homotetramer that consists of an N-terminal four-helical bundle that bifurcates into two elongated C-terminal dimeric coiled coils. This tetrameric building block potentially self-assembles into a supramolecular zipper-like lattice to mediate meiotic chromosome synapsis. Self-assembly is likely initiated by local proton density at chromosome axis, which is predicted to trigger antiparallel back to back assembly of adjacent C-terminal ends into tetrameric structures that anchor to chromosomal DNA. Then the N-terminal ends are predicted to undergo cooperative antiparallel head to head assembly at the midline of synaptonemal complexes central element to form a zipper-like lattice between properly aligned homologous chromosomes. The nascent synapsis generated by SYCP1 is stabilized through interaction with central element proteins SYCE1 and SYCE2. Interacts (via tetrameric core) with SYCE3; the interaction remodels SYCP1 homotetramers to 2:1 heterotrimers with SYCE3. SYCP1/SYCE3 heterotrimers form lattice assemblies as part of the mature synaptonemal complex via both lateral and head-to-head interactions. Forms a complex with EWSR1, PRDM9, SYCP3 and REC8; complex formation is dependent of phosphorylated form of REC8 and requires PRDM9 bound to hotspot DNA; EWSR1 joins PRDM9 with the chromosomal axis through REC8. Interacts with SPO16. As to expression, testis.

Its subcellular location is the nucleus. It localises to the chromosome. It is found in the centromere. Functionally, major component of the transverse filaments of synaptonemal complexes, formed between homologous chromosomes during meiotic prophase. Required for normal assembly of the central element of the synaptonemal complexes. Required for normal centromere pairing during meiosis. Required for normal meiotic chromosome synapsis during oocyte and spermatocyte development and for normal male and female fertility. The polypeptide is Synaptonemal complex protein 1 (Rattus norvegicus (Rat)).